We begin with the raw amino-acid sequence, 273 residues long: Dermonecrotic toxin LarSicTox-alphaIB1aii (273 aa).

Residue H5 is part of the active site. Mg(2+)-binding residues include E25 and D27. The active-site Nucleophile is H41. Intrachain disulfides connect C45-C51 and C47-C190. Mg(2+) is bound at residue D85. An N-linked (GlcNAc...) asparagine glycan is attached at N250.

This sequence belongs to the arthropod phospholipase D family. Class II subfamily. The cofactor is Mg(2+). Expressed by the venom gland.

It is found in the secreted. It carries out the reaction an N-(acyl)-sphingosylphosphocholine = an N-(acyl)-sphingosyl-1,3-cyclic phosphate + choline. It catalyses the reaction an N-(acyl)-sphingosylphosphoethanolamine = an N-(acyl)-sphingosyl-1,3-cyclic phosphate + ethanolamine. The enzyme catalyses a 1-acyl-sn-glycero-3-phosphocholine = a 1-acyl-sn-glycero-2,3-cyclic phosphate + choline. The catalysed reaction is a 1-acyl-sn-glycero-3-phosphoethanolamine = a 1-acyl-sn-glycero-2,3-cyclic phosphate + ethanolamine. Dermonecrotic toxins cleave the phosphodiester linkage between the phosphate and headgroup of certain phospholipids (sphingolipid and lysolipid substrates), forming an alcohol (often choline) and a cyclic phosphate. This toxin acts on sphingomyelin (SM). It may also act on ceramide phosphoethanolamine (CPE), lysophosphatidylcholine (LPC) and lysophosphatidylethanolamine (LPE), but not on lysophosphatidylserine (LPS), and lysophosphatidylglycerol (LPG). It acts by transphosphatidylation, releasing exclusively cyclic phosphate products as second products. Induces dermonecrosis, hemolysis, increased vascular permeability, edema, inflammatory response, and platelet aggregation. The sequence is that of Dermonecrotic toxin LarSicTox-alphaIB1aii from Loxosceles arizonica (Arizona brown spider).